We begin with the raw amino-acid sequence, 341 residues long: MPSIRLADLAEQLDAELHGDGDIVITGVASMQSATTGHITFMVNPKYREHLGLCQASAVVMTQDDLPFAKSAALVVKNPYLTYARMAQILDTTPQPAQNIAPSAVIDATATLGSNVSVGANAVIESGVQLGDNVVIGAGCFVGKNSKIGAGSRLWANVTIYHDIQIGENCLIQSSTVIGADGFGYANDRGNWVKIPQLGRVIIGDRVEIGACTTIDRGALDDTVIGNGVIIDNQCQIAHNVVIGDNTAVAGGVIMAGSLKIGRYCMIGGASVINGHMEICDKVTVTGMGMVMRPITEPGVYSSGIPLQPNKVWRKTAALVMNIDDMSKRLKAIERKVNQQD.

Residue H239 is the Proton acceptor of the active site.

Belongs to the transferase hexapeptide repeat family. LpxD subfamily. As to quaternary structure, homotrimer.

It catalyses the reaction a UDP-3-O-[(3R)-3-hydroxyacyl]-alpha-D-glucosamine + a (3R)-hydroxyacyl-[ACP] = a UDP-2-N,3-O-bis[(3R)-3-hydroxyacyl]-alpha-D-glucosamine + holo-[ACP] + H(+). It carries out the reaction UDP-3-O-[(3R)-3-hydroxytetradecanoyl]-alpha-D-glucosamine + (3R)-hydroxytetradecanoyl-[ACP] = UDP-2-N,3-O-bis[(3R)-3-hydroxytetradecanoyl]-alpha-D-glucosamine + holo-[ACP] + H(+). It functions in the pathway glycolipid biosynthesis; lipid IV(A) biosynthesis; lipid IV(A) from (3R)-3-hydroxytetradecanoyl-[acyl-carrier-protein] and UDP-N-acetyl-alpha-D-glucosamine: step 3/6. In terms of biological role, catalyzes the N-acylation of UDP-3-O-(hydroxytetradecanoyl)glucosamine using 3-hydroxytetradecanoyl-ACP as the acyl donor. Is involved in the biosynthesis of lipid A, a phosphorylated glycolipid that anchors the lipopolysaccharide to the outer membrane of the cell. The protein is UDP-3-O-(3-hydroxymyristoyl)glucosamine N-acyltransferase of Salmonella paratyphi A (strain ATCC 9150 / SARB42).